Reading from the N-terminus, the 185-residue chain is Lactoylglutathione lyase (185 aa).

The interval Met1–Ala22 is disordered. In terms of domain architecture, VOC spans Ile27 to Leu174. The substrate site is built by Gln30 and Arg34. Gln30 contributes to the Zn(2+) binding site. Glu96 is a binding site for Zn(2+). Substrate is bound by residues Asn100, Arg120, His124, and Lys154–Met155. His124 provides a ligand contact to Zn(2+). A Zn(2+)-binding site is contributed by Glu170. The active-site Proton donor/acceptor is the Glu170.

This sequence belongs to the glyoxalase I family. Zn(2+) serves as cofactor.

It carries out the reaction (R)-S-lactoylglutathione = methylglyoxal + glutathione. Its pathway is secondary metabolite metabolism; methylglyoxal degradation; (R)-lactate from methylglyoxal: step 1/2. In terms of biological role, catalyzes the conversion of hemimercaptal, formed from methylglyoxal and glutathione, to S-lactoylglutathione. This Arabidopsis thaliana (Mouse-ear cress) protein is Lactoylglutathione lyase.